A 445-amino-acid polypeptide reads, in one-letter code: Probable fructoselysine/psicoselysine transporter FrlA (445 aa).

The next 12 helical transmembrane spans lie at 10-30 (LGFW…GIFV), 38-58 (AAGT…IVIP), 93-113 (GWAS…LAIV), 121-141 (PIDP…FMLL), 155-175 (LITI…IFWF), 181-201 (AAPT…LAGI), 236-256 (CLLV…LMPF), 273-293 (IPAL…IVIL), 334-354 (IILQ…TSLL), 355-375 (GYFT…IIWC), 389-410 (AFGL…STFV), and 417-435 (LICA…AFWA).

The protein belongs to the amino acid-polyamine-organocation (APC) superfamily.

It is found in the cell inner membrane. The enzyme catalyses N(6)-(D-fructosyl)-L-lysine(in) = N(6)-(D-fructosyl)-L-lysine(out). The catalysed reaction is N(6)-(D-psicosyl)-L-lysine(in) = N(6)-(D-psicosyl)-L-lysine(out). It participates in carbohydrate metabolism; fructoselysine degradation. In terms of biological role, is likely involved in the transport of fructoselysine and psicoselysine to the cytoplasm, where they are degraded. This Escherichia coli (strain K12) protein is Probable fructoselysine/psicoselysine transporter FrlA.